A 449-amino-acid polypeptide reads, in one-letter code: Alginate biosynthesis transcriptional regulatory protein AlgB (449 aa).

Positions 10 to 124 (RILLVDDESA…QLRLAAAKQL (115 aa)) constitute a Response regulatory domain. The residue at position 59 (Asp-59) is a 4-aspartylphosphate. The region spanning 147-376 (LESHSPAMAA…LRNVIERASI (230 aa)) is the Sigma-54 factor interaction domain. ATP is bound by residues 175–182 (GESGSGKG) and 238–247 (ADGGTLFLDE). Residues 426 to 445 (LDQAAKTLGIDASTLYRKRK) constitute a DNA-binding region (H-T-H motif).

Post-translationally, phosphorylated by KinB.

Its pathway is glycan biosynthesis; alginate biosynthesis [regulation]. Its function is as follows. Member of the two-component regulatory system AlgB/KinB involved in regulation of alginate biosynthesis genes. Positive regulator of the alginate biosynthetic gene AlgD. The polypeptide is Alginate biosynthesis transcriptional regulatory protein AlgB (algB) (Pseudomonas aeruginosa (strain ATCC 15692 / DSM 22644 / CIP 104116 / JCM 14847 / LMG 12228 / 1C / PRS 101 / PAO1)).